A 955-amino-acid chain; its full sequence is Calsyntenin-2 (955 aa).

An N-terminal signal peptide occupies residues 1 to 20 (MLPGRLCWVPLLLALGVGSG). The Extracellular portion of the chain corresponds to 21–831 (SGGGGDSRQR…SIQHSSVVPS (811 aa)). 2 consecutive Cadherin domains span residues 44-160 (IETS…APTF) and 161-280 (KEPA…MPLF). Asn-56 and Asn-98 each carry an N-linked (GlcNAc...) asparagine glycan. Asn-342, Asn-374, Asn-716, and Asn-729 each carry an N-linked (GlcNAc...) asparagine glycan. Residues 832 to 852 (IATVVIIISVCMLVFVVAMGV) traverse the membrane as a helical segment. Residues 853-955 (YRVRIAHQHF…LEWDDSTLPY (103 aa)) lie on the Cytoplasmic side of the membrane. The disordered stretch occupies residues 887-955 (PMEKHEGPGH…LEWDDSTLPY (69 aa)). Residues 888–898 (MEKHEGPGHGE) are compositionally biased toward basic and acidic residues. Acidic residues-rich tracts occupy residues 899 to 913 (DETE…EEEM) and 920 to 929 (DDSEEEEEEE).

It belongs to the calsyntenin family. Proteolytically processed under normal cellular conditions. A primary zeta-cleavage generates a large extracellular (soluble) N-terminal domain (sAlc) and a short C-terminal transmembrane fragment (CTF1). A secondary cleavage catalyzed by gamma-secretase within the transmembrane domain releases the beta-Alc-gamma chain in the extracellular milieu and produces an intracellular fragment (AlcICD). This processing is strongly suppressed in the tripartite complex formed with APBA2 and APP, which seems to prevent the association with PSEN1. As to expression, restricted to the brain.

It is found in the postsynaptic cell membrane. The protein resides in the endoplasmic reticulum membrane. It localises to the golgi apparatus membrane. Its subcellular location is the cell projection. The protein localises to the dendrite. Postsynaptic adhesion molecule that binds to presynaptic neurexins to mediate synapse formation, and which is involved in learning and memory. Promotes synapse development by acting as a cell adhesion molecule at the postsynaptic membrane, which associates with neurexin-alpha at the presynaptic membrane. The chain is Calsyntenin-2 from Homo sapiens (Human).